Reading from the N-terminus, the 100-residue chain is Large ribosomal subunit protein eL14 (100 aa).

The protein belongs to the eukaryotic ribosomal protein eL14 family.

The protein is Large ribosomal subunit protein eL14 of Aeropyrum pernix (strain ATCC 700893 / DSM 11879 / JCM 9820 / NBRC 100138 / K1).